Consider the following 947-residue polypeptide: Protein translocase subunit SecA (947 aa).

Residues glutamine 87, 105-109 (GEGKT), and aspartate 494 each bind ATP. Residues 860–947 (TAPKPLPTQE…NRAPKSKRKR (88 aa)) are disordered. A compositionally biased stretch (low complexity) spans 870–885 (AAARTTGTAAPTALRA). Basic and acidic residues-rich tracts occupy residues 903 to 914 (EDGKAKATRDSA) and 922 to 931 (ASRRERREAA).

Belongs to the SecA family. Monomer and homodimer. Part of the essential Sec protein translocation apparatus which comprises SecA, SecYEG and auxiliary proteins SecDF. Other proteins may also be involved.

The protein resides in the cell membrane. It is found in the cytoplasm. It carries out the reaction ATP + H2O + cellular proteinSide 1 = ADP + phosphate + cellular proteinSide 2.. In terms of biological role, part of the Sec protein translocase complex. Interacts with the SecYEG preprotein conducting channel. Has a central role in coupling the hydrolysis of ATP to the transfer of proteins into and across the cell membrane, serving as an ATP-driven molecular motor driving the stepwise translocation of polypeptide chains across the membrane. This is Protein translocase subunit SecA from Rhodococcus erythropolis (strain PR4 / NBRC 100887).